The following is a 149-amino-acid chain: Large ribosomal subunit protein uL15C (149 aa).

The disordered stretch occupies residues Arg21 to His40.

This sequence belongs to the universal ribosomal protein uL15 family. In terms of assembly, component of the large ribosomal subunit.

The protein localises to the cytoplasm. Its subcellular location is the cytosol. It is found in the endoplasmic reticulum. Functionally, component of the large ribosomal subunit. The ribosome is a large ribonucleoprotein complex responsible for the synthesis of proteins in the cell. The chain is Large ribosomal subunit protein uL15C (rpl27a-3) from Entamoeba histolytica (strain ATCC 30459 / HM-1:IMSS / ABRM).